Consider the following 104-residue polypeptide: Cytochrome c-552 (104 aa).

The signal sequence occupies residues 1 to 23; that stretch reads MHLHLRGICLVLAVASSSSSALA. Positions 37, 40, 41, and 82 each coordinate heme c.

The protein belongs to the cytochrome c family. In terms of assembly, monoheme monomer. Has the tendency to dimerize. Post-translationally, binds 1 heme c group covalently per subunit.

The protein resides in the periplasm. In Bradyrhizobium diazoefficiens (strain JCM 10833 / BCRC 13528 / IAM 13628 / NBRC 14792 / USDA 110), this protein is Cytochrome c-552 (cycB).